Here is a 436-residue protein sequence, read N- to C-terminus: Type II methyltransferase M.BsuRI (436 aa).

Positions 59-409 (INVLSLFSGC…SPIANWAINY (351 aa)) constitute an SAM-dependent MTase C5-type domain. The active site involves Cys-157.

This sequence belongs to the class I-like SAM-binding methyltransferase superfamily. C5-methyltransferase family. Monomer.

It carries out the reaction a 2'-deoxycytidine in DNA + S-adenosyl-L-methionine = a 5-methyl-2'-deoxycytidine in DNA + S-adenosyl-L-homocysteine + H(+). Its function is as follows. A methylase, recognizes the double-stranded sequence 5'-GGCC-3', methylates C-3 on both strands, and protects the DNA from cleavage by the BsuRI endonuclease. The chain is Type II methyltransferase M.BsuRI (hsdRM) from Bacillus subtilis.